Consider the following 206-residue polypeptide: MTRRLIRFYDPVRMKAERKTSETEIKLEMNLHGTGQYRFDTEIPFFEHMLSHISKHGLIDLNLWLRGDIEIDCHHSVEDTAILMGTTIHKQLGDKAGIFRYGHFTLTMDEVLTTVAVDLGGRYFFKYTGPELTGKFGIYDAELSLEFLQKLALNAKMNLHVFVHYGDNKHHVHESIFKALGKALRMAIAQDSATAGAIPSTKGVLE.

The protein belongs to the imidazoleglycerol-phosphate dehydratase family.

It localises to the cytoplasm. It catalyses the reaction D-erythro-1-(imidazol-4-yl)glycerol 3-phosphate = 3-(imidazol-4-yl)-2-oxopropyl phosphate + H2O. The protein operates within amino-acid biosynthesis; L-histidine biosynthesis; L-histidine from 5-phospho-alpha-D-ribose 1-diphosphate: step 6/9. This Leptospira borgpetersenii serovar Hardjo-bovis (strain JB197) protein is Imidazoleglycerol-phosphate dehydratase.